The primary structure comprises 339 residues: Anthranilate phosphoribosyltransferase (339 aa).

Residues G82, 85–86, 92–95, 110–118, and S122 each bind 5-phospho-alpha-D-ribose 1-diphosphate; these read GD, NIST, and KHGNSSISS. G82 is an anthranilate binding site. Mg(2+) is bound at residue S94. Residue N113 participates in anthranilate binding. R168 is an anthranilate binding site. D227 and E228 together coordinate Mg(2+).

It belongs to the anthranilate phosphoribosyltransferase family. In terms of assembly, homodimer. It depends on Mg(2+) as a cofactor.

The catalysed reaction is N-(5-phospho-beta-D-ribosyl)anthranilate + diphosphate = 5-phospho-alpha-D-ribose 1-diphosphate + anthranilate. Its pathway is amino-acid biosynthesis; L-tryptophan biosynthesis; L-tryptophan from chorismate: step 2/5. Catalyzes the transfer of the phosphoribosyl group of 5-phosphorylribose-1-pyrophosphate (PRPP) to anthranilate to yield N-(5'-phosphoribosyl)-anthranilate (PRA). The chain is Anthranilate phosphoribosyltransferase from Ruthia magnifica subsp. Calyptogena magnifica.